Consider the following 402-residue polypeptide: Argininosuccinate synthase (402 aa).

9–17 (AYSGGLDTS) contributes to the ATP binding site. Tyr87 is an L-citrulline binding site. Gly117 is an ATP binding site. Thr119, Asn123, and Asp124 together coordinate L-aspartate. Position 123 (Asn123) interacts with L-citrulline. Positions 127, 176, 185, 261, and 273 each coordinate L-citrulline.

Belongs to the argininosuccinate synthase family. Type 1 subfamily. In terms of assembly, homotetramer.

The protein resides in the cytoplasm. It carries out the reaction L-citrulline + L-aspartate + ATP = 2-(N(omega)-L-arginino)succinate + AMP + diphosphate + H(+). It functions in the pathway amino-acid biosynthesis; L-arginine biosynthesis; L-arginine from L-ornithine and carbamoyl phosphate: step 2/3. The polypeptide is Argininosuccinate synthase (Chlorobium phaeobacteroides (strain BS1)).